A 1100-amino-acid polypeptide reads, in one-letter code: Collagen alpha-2(I) chain (1100 aa).

Residues 1-982 (QYDGVKAPDP…PGPAGGGYDV (982 aa)) are disordered. Low complexity-rich tracts occupy residues 122 to 170 (EPGA…AAGP), 200 to 209 (EPGPNGAVGP), and 216 to 237 (PGNN…AGAP). Residues 239–249 (FPGPRGGPGPQ) show a composition bias toward pro residues. Over residues 251 to 261 (PQGAAGQRGLA) the composition is skewed to low complexity. The segment covering 268-277 (GVKGDGGPKG) has biased composition (gly residues). Composition is skewed to low complexity over residues 333–352 (MPGA…PGDA), 358–385 (SGPA…AGPA), 435–448 (APGP…TGAT), and 460–472 (QGAS…QGLP). Gly residues predominate over residues 473–482 (GPAGGAGEAG). The span at 507 to 517 (NPGAAGASGPQ) shows a compositional bias: low complexity. The span at 530-557 (GTDGGKGEPGAAGAAGGPGHQGPGGMPG) shows a compositional bias: gly residues. Residues 568 to 579 (KGEKGEGGHRGP) are compositionally biased toward basic and acidic residues. The segment covering 633 to 646 (PAGAPGFAGPPGAD) has biased composition (low complexity). Over residues 656 to 665 (GPSGGKGESG) the composition is skewed to gly residues. 3 stretches are compositionally biased toward low complexity: residues 666 to 691 (PSGP…TGAR), 702 to 729 (FPGA…PAGK), and 757 to 775 (SGEK…LGLQ). A compositionally biased stretch (gly residues) spans 788 to 797 (GSPGGAGAVG). 2 stretches are compositionally biased toward low complexity: residues 798 to 820 (EAGR…LGLP) and 854 to 866 (AGPT…PGNR). The span at 867-876 (GESGPGGAAG) shows a compositional bias: gly residues. Over residues 877-892 (AVGPAGARGAAGPSGP) the composition is skewed to low complexity. Positions 893–907 (RGEKGVAGEKGERGM) are enriched in basic and acidic residues. Over residues 916-935 (LQGMPGPSGPSGDTGSAGPN) the composition is skewed to low complexity. A Fibrillar collagen NC1 domain is found at 1071–1100 (TRLPLLDLAPLDLGGADQEFGLDLGPVCFK).

The protein belongs to the fibrillar collagen family.

It is found in the secreted. The protein resides in the extracellular space. Its subcellular location is the extracellular matrix. This Epinephelus caninus (Dogtooth grouper) protein is Collagen alpha-2(I) chain.